Reading from the N-terminus, the 90-residue chain is Large ribosomal subunit protein bL31B-1 (90 aa).

This sequence belongs to the bacterial ribosomal protein bL31 family. Type B subfamily. As to quaternary structure, part of the 50S ribosomal subunit.

The sequence is that of Large ribosomal subunit protein bL31B-1 from Streptomyces coelicolor (strain ATCC BAA-471 / A3(2) / M145).